Here is a 133-residue protein sequence, read N- to C-terminus: Nickel-responsive regulator (133 aa).

His76, His87, His89, and Cys95 together coordinate Ni(2+).

Belongs to the transcriptional regulatory CopG/NikR family. In terms of assembly, homotetramer. The cofactor is Ni(2+).

In terms of biological role, transcriptional repressor of the nikABCDE operon. Is active in the presence of excessive concentrations of intracellular nickel. The protein is Nickel-responsive regulator of Enterobacter sp. (strain 638).